The sequence spans 350 residues: Succinylglutamate desuccinylase (350 aa).

Residues His71, Glu74, and His169 each contribute to the Zn(2+) site. Glu233 is an active-site residue.

The protein belongs to the AspA/AstE family. Succinylglutamate desuccinylase subfamily. It depends on Zn(2+) as a cofactor.

The catalysed reaction is N-succinyl-L-glutamate + H2O = L-glutamate + succinate. It functions in the pathway amino-acid degradation; L-arginine degradation via AST pathway; L-glutamate and succinate from L-arginine: step 5/5. In terms of biological role, transforms N(2)-succinylglutamate into succinate and glutamate. The protein is Succinylglutamate desuccinylase of Pseudoalteromonas atlantica (strain T6c / ATCC BAA-1087).